Consider the following 244-residue polypeptide: Leucyl/phenylalanyl-tRNA--protein transferase (244 aa).

The protein belongs to the L/F-transferase family.

Its subcellular location is the cytoplasm. It carries out the reaction N-terminal L-lysyl-[protein] + L-leucyl-tRNA(Leu) = N-terminal L-leucyl-L-lysyl-[protein] + tRNA(Leu) + H(+). It catalyses the reaction N-terminal L-arginyl-[protein] + L-leucyl-tRNA(Leu) = N-terminal L-leucyl-L-arginyl-[protein] + tRNA(Leu) + H(+). The enzyme catalyses L-phenylalanyl-tRNA(Phe) + an N-terminal L-alpha-aminoacyl-[protein] = an N-terminal L-phenylalanyl-L-alpha-aminoacyl-[protein] + tRNA(Phe). Its function is as follows. Functions in the N-end rule pathway of protein degradation where it conjugates Leu, Phe and, less efficiently, Met from aminoacyl-tRNAs to the N-termini of proteins containing an N-terminal arginine or lysine. The sequence is that of Leucyl/phenylalanyl-tRNA--protein transferase from Janthinobacterium sp. (strain Marseille) (Minibacterium massiliensis).